The sequence spans 197 residues: Prefoldin subunit 3 (197 aa).

Alanine 2 carries the post-translational modification N-acetylalanine. Lysine 59 bears the N6-acetyllysine mark.

The protein belongs to the prefoldin subunit alpha family. Heterohexamer of two PFD-alpha type and four PFD-beta type subunits. Binds to the C-terminal part of VHL.

It is found in the cytoplasm. Its subcellular location is the nucleus. In terms of biological role, binds specifically to cytosolic chaperonin (c-CPN) and transfers target proteins to it. Binds to nascent polypeptide chain and promotes folding in an environment in which there are many competing pathways for nonnative proteins. The protein is Prefoldin subunit 3 (VBP1) of Bos taurus (Bovine).